The following is a 652-amino-acid chain: 1,4-alpha-glucan branching enzyme GlgB (652 aa).

Catalysis depends on aspartate 322, which acts as the Nucleophile. Glutamate 373 functions as the Proton donor in the catalytic mechanism.

Belongs to the glycosyl hydrolase 13 family. GlgB subfamily. In terms of assembly, monomer.

The enzyme catalyses Transfers a segment of a (1-&gt;4)-alpha-D-glucan chain to a primary hydroxy group in a similar glucan chain.. It functions in the pathway glycan biosynthesis; glycogen biosynthesis. Functionally, catalyzes the formation of the alpha-1,6-glucosidic linkages in glycogen by scission of a 1,4-alpha-linked oligosaccharide from growing alpha-1,4-glucan chains and the subsequent attachment of the oligosaccharide to the alpha-1,6 position. The sequence is that of 1,4-alpha-glucan branching enzyme GlgB from Deinococcus geothermalis (strain DSM 11300 / CIP 105573 / AG-3a).